A 342-amino-acid chain; its full sequence is Phosphate acyltransferase (342 aa).

This sequence belongs to the PlsX family. As to quaternary structure, homodimer. Probably interacts with PlsY.

Its subcellular location is the cytoplasm. It carries out the reaction a fatty acyl-[ACP] + phosphate = an acyl phosphate + holo-[ACP]. Its pathway is lipid metabolism; phospholipid metabolism. Catalyzes the reversible formation of acyl-phosphate (acyl-PO(4)) from acyl-[acyl-carrier-protein] (acyl-ACP). This enzyme utilizes acyl-ACP as fatty acyl donor, but not acyl-CoA. This chain is Phosphate acyltransferase, found in Trichormus variabilis (strain ATCC 29413 / PCC 7937) (Anabaena variabilis).